The chain runs to 320 residues: D-amino-acid oxidase (320 aa).

FAD is bound by residues G18, G19, V20, I21, T47, T48, S49, G53, G54, L55, V161, and T176. Residues Y220 and R275 each coordinate D-proline. Residues Y220 and R275 each coordinate D-serine. 5 residues coordinate FAD: R275, G301, G302, G304, and T306. G302 provides a ligand contact to D-proline. D-serine is bound at residue G302.

It belongs to the DAMOX/DASOX family. Requires FAD as cofactor.

The protein resides in the cytoplasm. It is found in the secreted. Its subcellular location is the cell wall. It carries out the reaction a D-alpha-amino acid + O2 + H2O = a 2-oxocarboxylate + H2O2 + NH4(+). It catalyses the reaction D-leucine + O2 + H2O = 4-methyl-2-oxopentanoate + H2O2 + NH4(+). The enzyme catalyses D-valine + O2 + H2O = 3-methyl-2-oxobutanoate + H2O2 + NH4(+). The catalysed reaction is D-isoleucine + O2 + H2O = (R)-3-methyl-2-oxopentanoate + H2O2 + NH4(+). It carries out the reaction D-methionine + O2 + H2O = 4-methylsulfanyl-2-oxobutanoate + H2O2 + NH4(+). In terms of biological role, catalyzes the oxidative deamination of D-amino acids with broad substrate specificity. The polypeptide is D-amino-acid oxidase (Streptomyces coelicolor (strain ATCC BAA-471 / A3(2) / M145)).